Consider the following 174-residue polypeptide: Dehydratase AgnL8 (174 aa).

Substrate contacts are provided by Tyr-24, Tyr-44, and Phe-47. Catalysis depends on residues His-79 and His-104.

The protein belongs to the scytalone dehydratase family. In terms of assembly, homotrimer. Each subunit contains an active site, located in the central part of the hydrophobic core of the monomer, which functions independently.

It participates in secondary metabolite biosynthesis. Dehydratase; part of the gene cluster that mediates the biosynthesis of agnestins, dihydroxy-xanthone metabolites. The pathway begins with the assembly and cyclization of atrochrysone thioester by the non-reducing polyketide synthase Agnpks1. The atrochrysone carboxyl ACP thioesterase AgnL7 then breaks the thioester bond and releases the atrochrysone carboxylic acid as the first enzyme-free intermediate. The decarboxylase AgnL1 then catalyzes the concerted decarboxylation-elimination required to convert atochrysone carboxylic acid into emodin anthrone, which is further oxidized to emodin by the anthrone oxygenase AgnL2. Emodin then undergoes reduction catalyzed by the oxidoreductase AgnL4 to yield the dihydroquinone tautomer which is the substrate for reduction by the short chain dehydrogenase AgnL6 reduction to produce hydroxyketone, followed by AgnL8 dehydration and likely spontaneous autoxidation to chrysophanol. Baeyer-Villiger oxidation by the oxidase AgnL3 leads to monodictyphenone via cleavage of the C-10/C-10a bond of chrysophanol. Alternative cleavage at the C-4a/C-10 bond of chrysophanol also leads to the formation some cephalone F. Further conversion to agnestins A and B, requires reduction to dihydro-monodictyphenone, oxidation to agnestin C probably via an epoxide, and rearrangement to either agnestin A or agnestin B directly, although agnestin A or agnestin B can also interconvert. Within the cluster, AgnR1 is the only unassigned oxidoreductase present which could be involved in this conversion. However, AgnR1 seems not to be involved in this step, and thus genes involved in the proposed oxidation/reduction may be located elsewhere on the genome. Further agnestin A derivatives are probably formed by spontaneous decarboxylations, dehydrations and methanolysis reactions. The polypeptide is Dehydratase AgnL8 (Paecilomyces divaricatus (Penicillium divaricatum)).